The chain runs to 256 residues: Trans-aconitate 2-methyltransferase (256 aa).

This sequence belongs to the methyltransferase superfamily. Tam family.

The protein resides in the cytoplasm. The catalysed reaction is trans-aconitate + S-adenosyl-L-methionine = (E)-3-(methoxycarbonyl)pent-2-enedioate + S-adenosyl-L-homocysteine. Catalyzes the S-adenosylmethionine monomethyl esterification of trans-aconitate. In Rhodopseudomonas palustris (strain BisB18), this protein is Trans-aconitate 2-methyltransferase.